Here is a 344-residue protein sequence, read N- to C-terminus: Sesquiterpene synthase 9 (344 aa).

Residues aspartate 88, asparagine 224, serine 228, and glutamate 232 each contribute to the Mg(2+) site. Residues 88 to 92 (DEYSD) carry the DDXXD motif motif. The NSE/DTE motif signature appears at 224-232 (NDMLSWNVE). (2E,6E)-farnesyl diphosphate-binding residues include arginine 313 and tyrosine 314.

The protein belongs to the terpene synthase family. Mg(2+) is required as a cofactor.

Functionally, terpene cyclase that catalyzes the cyclization of farnesyl diphosphate (FPP) to a single major sesquiterpene scaffold whose chemical structure is still unknown. The polypeptide is Sesquiterpene synthase 9 (Postia placenta (strain ATCC 44394 / Madison 698-R) (Brown rot fungus)).